A 107-amino-acid chain; its full sequence is Circadian clock oscillator protein KaiB (107 aa).

It belongs to the KaiB family. As to quaternary structure, may undergo a major conformational rearrangment; in the free state forms homooligomers. When bound to KaiC switches to a monomeric thioredoxin-fold (KaiB(fs)). The active oscillator complex is probably KaiC(6):KaiB(6).

Its function is as follows. Component of the KaiBC clock protein complex, which constitutes the main circadian regulator in cyanobacteria; it may modify the ATPase activity of KaiC. In terms of biological role, may be a metamorphic protein which reversibly switches between an inactive tetrameric fold and a rare, thioredoxin-like monomeric fold (KaiB(fs)). KaiB(fs) binds phospho-KaiC, and perhaps clock output effectors. This chain is Circadian clock oscillator protein KaiB, found in Prochlorococcus marinus (strain NATL2A).